Reading from the N-terminus, the 631-residue chain is Phosphomethylpyrimidine synthase (631 aa).

Substrate is bound by residues N239, M268, Y297, H333, 353-355 (SRG), 394-397 (DGLR), and E433. H437 lines the Zn(2+) pocket. Residue Y460 coordinates substrate. Zn(2+) is bound at residue H501. [4Fe-4S] cluster contacts are provided by C581, C584, and C589.

Belongs to the ThiC family. Homodimer. The cofactor is [4Fe-4S] cluster.

It carries out the reaction 5-amino-1-(5-phospho-beta-D-ribosyl)imidazole + S-adenosyl-L-methionine = 4-amino-2-methyl-5-(phosphooxymethyl)pyrimidine + CO + 5'-deoxyadenosine + formate + L-methionine + 3 H(+). The protein operates within cofactor biosynthesis; thiamine diphosphate biosynthesis. Its function is as follows. Catalyzes the synthesis of the hydroxymethylpyrimidine phosphate (HMP-P) moiety of thiamine from aminoimidazole ribotide (AIR) in a radical S-adenosyl-L-methionine (SAM)-dependent reaction. This is Phosphomethylpyrimidine synthase from Shigella flexneri serotype 5b (strain 8401).